Reading from the N-terminus, the 930-residue chain is Translation initiation factor IF-2 (930 aa).

A compositionally biased stretch (low complexity) spans 50–67 (FKPAAAPKVEAKPAAPKV). Disordered stretches follow at residues 50 to 217 (FKPA…SSEE) and 260 to 346 (EVVP…HELP). Basic and acidic residues-rich tracts occupy residues 68–90 (SAEK…EAKP) and 110–125 (FKAE…AERR). The span at 129–141 (KGNNRDQQQNGNR) shows a compositional bias: low complexity. Basic and acidic residues-rich tracts occupy residues 157-167 (RDNRRFNDQAK) and 262-295 (VPEK…DGPR). A compositionally biased stretch (low complexity) spans 309 to 318 (NQKNSNWNNN). Positions 337–346 (VTERKFHELP) are enriched in basic and acidic residues. Positions 432–599 (ERPPVVTIMG…TVLLVAEIQE (168 aa)) constitute a tr-type G domain. Residues 441–448 (GHVDHGKT) are G1. Position 441 to 448 (441 to 448 (GHVDHGKT)) interacts with GTP. The interval 466–470 (GITQH) is G2. The interval 487-490 (DTPG) is G3. GTP-binding positions include 487–491 (DTPGH) and 541–544 (NKID). Residues 541–544 (NKID) form a G4 region. The segment at 577–579 (SAK) is G5.

Belongs to the TRAFAC class translation factor GTPase superfamily. Classic translation factor GTPase family. IF-2 subfamily.

It is found in the cytoplasm. Its function is as follows. One of the essential components for the initiation of protein synthesis. Protects formylmethionyl-tRNA from spontaneous hydrolysis and promotes its binding to the 30S ribosomal subunits. Also involved in the hydrolysis of GTP during the formation of the 70S ribosomal complex. The protein is Translation initiation factor IF-2 of Streptococcus pneumoniae (strain Taiwan19F-14).